Here is a 540-residue protein sequence, read N- to C-terminus: Phosphatidylinositol 4-phosphate 5-kinase type-1 beta (540 aa).

The disordered stretch occupies residues 1–21; sequence MSSAAENGEAAPGKQNEEKTY. A PIPK domain is found at 25-395; the sequence is ASSAIKGAIQ…RFLKFMNSRV (371 aa). A phosphoserine mark is found at Ser-445, Ser-447, and Ser-448.

As to quaternary structure, interacts with RAC1, AJUBA, PLD1, PLD2 and ARF1. Detected in heart, pancreas, brain, kidney, skeletal muscle and lung.

It is found in the cytoplasm. It localises to the cytosol. The protein localises to the cell membrane. The protein resides in the endomembrane system. The enzyme catalyses a 1,2-diacyl-sn-glycero-3-phospho-(1D-myo-inositol 4-phosphate) + ATP = a 1,2-diacyl-sn-glycero-3-phospho-(1D-myo-inositol-4,5-bisphosphate) + ADP + H(+). The catalysed reaction is 1-octadecanoyl-2-(5Z,8Z,11Z,14Z)-eicosatetraenoyl-sn-glycero-3-phospho-1D-myo-inositol 4-phosphate + ATP = 1-octadecanoyl-2-(5Z,8Z,11Z,14Z)-eicosatetraenoyl-sn-glycero-3-phospho-1D-myo-inositol 4,5-bisphosphate + ADP + H(+). It carries out the reaction 1-octadecanoyl-2-(9Z)-octadecenoyl-sn-glycero-3-phospho-1D-myo-inositol 4-phosphate + ATP = 1-octadecanoyl-2-(9Z)-octadecenoyl-sn-glycero-3-phospho-1D-myo-inositol 4,5-bisphosphate + ADP + H(+). It catalyses the reaction 1-octadecanoyl-2-(9Z)-octadecenoyl-sn-glycero-3-phospho-1D-myo-inositol + ATP = 1-octadecanoyl-2-(9Z)-octadecenoyl-sn-glycero-3-phospho-1D-myo-inositol 5-phosphate + ADP + H(+). The enzyme catalyses 1-octadecanoyl-2-(9Z,12Z)-octadecadienoyl-sn-glycero-3-phospho-1D-myo-inositol + ATP = 1-octadecanoyl-2-(9Z,12Z)-octadecadienoyl-sn-glycero-3-phospho-1D-myo-inositol 5-phosphate + ADP + H(+). The catalysed reaction is 1-octadecanoyl-2-(5Z,8Z,11Z,14Z-eicosatetraenoyl)-sn-glycero-3-phospho-(1D-myo-inositol) + ATP = 1-octadecanoyl-2-(5Z,8Z,11Z,14Z)-eicosatetraenoyl-sn-glycero-3-phospho-1D-myo-inositol 5-phosphate + ADP + H(+). It carries out the reaction 1,2-di-(9Z,12Z)-octadecadienoyl-sn-glycero-3-phospho-1D-myo-inositol + ATP = 1,2-di(9Z,12Z)-octadecadienoyl-sn-glycero-3-phospho-1D-myo-inositol 5-phosphate + ADP + H(+). Functionally, catalyzes the phosphorylation of phosphatidylinositol 4-phosphate (PtdIns(4)P/PI4P) to form phosphatidylinositol 4,5-bisphosphate (PtdIns(4,5)P2/PIP2), a lipid second messenger that regulates several cellular processes such as signal transduction, vesicle trafficking, actin cytoskeleton dynamics, cell adhesion, and cell motility. PtdIns(4,5)P2 can directly act as a second messenger or can be utilized as a precursor to generate other second messengers: inositol 1,4,5-trisphosphate (IP3), diacylglycerol (DAG) or phosphatidylinositol-3,4,5-trisphosphate (PtdIns(3,4,5)P3/PIP3). Mediates RAC1-dependent reorganization of actin filaments. Contributes to the activation of phospholipase PLD2. Together with PIP5K1A, is required, after stimulation by G-protein coupled receptors, for the synthesis of IP3 that will induce stable platelet adhesion. The polypeptide is Phosphatidylinositol 4-phosphate 5-kinase type-1 beta (Homo sapiens (Human)).